Reading from the N-terminus, the 350-residue chain is MANYTSAPEDDYDVFIEDDLSNDERELCSPYDPQALLAQLVPYLFITVFLVGLLDNILVVLIMVKYKGLKQVENIYLLNLAVCNLCFLCTLPFWVHMAWHEGDPGEPLCKILLVLYSVGLFSEAFFNVLLTVQRYQKFFQMRGFFSATRMVAGSIFPSALVWVIAVLVMLPELAFYKPQMENQKYKCFFGRPLFLPADETFWKHFLTLKMNILGFLLPLFVFVFCYVRMRRTLKFGERGYDLFKLVFTIMVVFLLMWGPYNIALFLSAFNEHFSLHGCESSHNLDRSTLITKIIATTHCCVNPLLYVFFDEAFRKHLYHFCHLCNDTAPQPTEEPAQGTSREEPCLSTKM.

Over 1–43 (MANYTSAPEDDYDVFIEDDLSNDERELCSPYDPQALLAQLVPY) the chain is Extracellular. Asn3 carries N-linked (GlcNAc...) asparagine glycosylation. The helical transmembrane segment at 44–64 (LFITVFLVGLLDNILVVLIMV) threads the bilayer. The Cytoplasmic segment spans residues 65–74 (KYKGLKQVEN). Residues 75 to 95 (IYLLNLAVCNLCFLCTLPFWV) form a helical membrane-spanning segment. The Extracellular portion of the chain corresponds to 96–110 (HMAWHEGDPGEPLCK). Cys109 and Cys187 form a disulfide bridge. Residues 111 to 131 (ILLVLYSVGLFSEAFFNVLLT) traverse the membrane as a helical segment. The Cytoplasmic segment spans residues 132–149 (VQRYQKFFQMRGFFSATR). The chain crosses the membrane as a helical span at residues 150-170 (MVAGSIFPSALVWVIAVLVML). Residues 171–204 (PELAFYKPQMENQKYKCFFGRPLFLPADETFWKH) are Extracellular-facing. Residues 205-225 (FLTLKMNILGFLLPLFVFVFC) traverse the membrane as a helical segment. The Cytoplasmic segment spans residues 226–244 (YVRMRRTLKFGERGYDLFK). A helical membrane pass occupies residues 245–265 (LVFTIMVVFLLMWGPYNIALF). The Extracellular portion of the chain corresponds to 266–288 (LSAFNEHFSLHGCESSHNLDRST). Residues 289 to 309 (LITKIIATTHCCVNPLLYVFF) form a helical membrane-spanning segment. At 310-350 (DEAFRKHLYHFCHLCNDTAPQPTEEPAQGTSREEPCLSTKM) the chain is on the cytoplasmic side. Residues 329–350 (PQPTEEPAQGTSREEPCLSTKM) form a disordered region.

This sequence belongs to the G-protein coupled receptor 1 family.

It localises to the cell membrane. Receptor for CCL19 and chemerin/RARRES2. Does not appear to be a signaling receptor, but may have a role in modulating chemokine-triggered immune responses by capturing and internalizing CCL19 or by presenting RARRES2 ligand to CMKLR1, a functional signaling receptor. Plays a critical role for the development of Th2 responses. In Sus scrofa (Pig), this protein is Chemokine C-C motif receptor-like 2 (CCRL2).